A 66-amino-acid chain; its full sequence is Large ribosomal subunit protein uL29 (66 aa).

Belongs to the universal ribosomal protein uL29 family.

This is Large ribosomal subunit protein uL29 from Francisella tularensis subsp. tularensis (strain FSC 198).